The chain runs to 297 residues: Probable porphobilinogen deaminase (297 aa).

Position 233 is an S-(dipyrrolylmethanemethyl)cysteine (Cys-233).

It belongs to the HMBS family. Requires dipyrromethane as cofactor.

It carries out the reaction 4 porphobilinogen + H2O = hydroxymethylbilane + 4 NH4(+). Its pathway is porphyrin-containing compound metabolism; protoporphyrin-IX biosynthesis; coproporphyrinogen-III from 5-aminolevulinate: step 2/4. Functionally, tetrapolymerization of the monopyrrole PBG into the hydroxymethylbilane pre-uroporphyrinogen in several discrete steps. This is Probable porphobilinogen deaminase from Thermoplasma volcanium (strain ATCC 51530 / DSM 4299 / JCM 9571 / NBRC 15438 / GSS1).